The primary structure comprises 113 residues: Large ribosomal subunit protein bL19 (113 aa).

Belongs to the bacterial ribosomal protein bL19 family.

In terms of biological role, this protein is located at the 30S-50S ribosomal subunit interface and may play a role in the structure and function of the aminoacyl-tRNA binding site. The protein is Large ribosomal subunit protein bL19 of Mycobacterium marinum (strain ATCC BAA-535 / M).